The following is a 239-amino-acid chain: MTSLLVHTYPSLVKGILIKRYKRFFADIQLDNGELITAHCANTGPMTDVCVEGQPVYLSRSDNPKRKLAYTWEMIQLGETWVGVNTNLPNQVVKNALLQGVFPDLVKNETEVRSEVAYGQNNGSRIDFLLTHGDNSLTYIEVKNTTWNQGETALFPDTVTTRGQKHLQELMALLPAAEAIMLYFINRGDCYRFAPGDSKDTKYGQLLRQAVAKGVKVLPCRFQVTPTGIYYLGLAELQL.

This sequence belongs to the SfsA family.

The polypeptide is Sugar fermentation stimulation protein homolog (Microcystis aeruginosa (strain NIES-843 / IAM M-2473)).